Here is a 256-residue protein sequence, read N- to C-terminus: tRNA pseudouridine synthase A (256 aa).

The Nucleophile role is filled by aspartate 55. A substrate-binding site is contributed by tyrosine 113.

Belongs to the tRNA pseudouridine synthase TruA family. As to quaternary structure, homodimer.

The enzyme catalyses uridine(38/39/40) in tRNA = pseudouridine(38/39/40) in tRNA. In terms of biological role, formation of pseudouridine at positions 38, 39 and 40 in the anticodon stem and loop of transfer RNAs. This Ligilactobacillus salivarius (strain UCC118) (Lactobacillus salivarius) protein is tRNA pseudouridine synthase A.